The sequence spans 878 residues: E3 ubiquitin-protein ligase BRE1-like 1 (878 aa).

The segment at 1–21 (MASTGEPDRKRRHFSSISPSE) is disordered. 4 coiled-coil regions span residues 48-76 (QNLK…IKEK), 200-261 (QLAL…ELQQ), 293-382 (SDRE…EKLQ), and 537-624 (LDMY…ILKS). The RING-type zinc finger occupies 826-865 (CKACNDRPKEVVITKCYHLFCNPCVQKLTGTRQKKCPTCS).

Belongs to the BRE1 family. May act as a tetramer consisting of two copies of HUB1 and two copies of HUB2. Interacts with MED21. In terms of tissue distribution, ubiquitously expressed.

It is found in the nucleus. It carries out the reaction S-ubiquitinyl-[E2 ubiquitin-conjugating enzyme]-L-cysteine + [acceptor protein]-L-lysine = [E2 ubiquitin-conjugating enzyme]-L-cysteine + N(6)-ubiquitinyl-[acceptor protein]-L-lysine.. It functions in the pathway protein modification; protein ubiquitination. Functionally, E3 ubiquitin-protein ligase that monoubiquitinates H2B to form H2BK143ub1. H2BK143ub1 gives a specific tag for epigenetic transcriptional activation and is also prerequisite for H3K4me and maybe H3K79me. It thereby plays a central role in histone code and gene regulation. Forms a ubiquitin ligase complex in cooperation with the E2 enzyme UBC2/RAD6. Required for the regulation of flowering time and defense against necrotrophic fungal pathogens. Involved in the control of seed dormancy and germination. This is E3 ubiquitin-protein ligase BRE1-like 1 (HUB1) from Arabidopsis thaliana (Mouse-ear cress).